The following is a 478-amino-acid chain: Divinyl ether synthase CYP74D3 (478 aa).

A heme-binding site is contributed by C432.

This sequence belongs to the cytochrome P450 family. 9-divinyl ether synthase subfamily. In terms of tissue distribution, not detected in leaves, stems or roots of healthy plants.

It localises to the cytoplasm. It is found in the cytosol. The enzyme catalyses (9S)-hydroperoxy-(10E,12Z)-octadecadienoate = colneleate + H2O. It catalyses the reaction (9S)-hydroperoxy-(10E,12Z,15Z)-octadecatrienoate = colnelenate + H2O. Strictly inducible cytochrome P450 involved in the biosynthesis of the anti-fungal toxins colneleate and colnelenate. Can use (9S)-hydroperoxy-(10E,12Z)-octadecadienoate (9-HPOD) and (9S)-hydroperoxy-(10E,12Z,15Z)-octadecatrienoate (9-HPOT) as substrates, but has a very low activity with the corresponding 13-hydroperoxides (13-HPOD and 13-POT). The protein is Divinyl ether synthase CYP74D3 of Nicotiana tabacum (Common tobacco).